Here is an 825-residue protein sequence, read N- to C-terminus: Translation initiation factor IF-2 (825 aa).

Basic and acidic residues-rich tracts occupy residues 1 to 19 (MTKKQENETSKELGMDNKK), 35 to 45 (RKGEKKTEGKR), 70 to 98 (LLKDLKQKQRADEARLDQESKAAKQEYKK), and 113 to 122 (KKVESVEKPA). The interval 1-239 (MTKKQENETS…TQRKDRPLPE (239 aa)) is disordered. Residues 158–169 (PSSSRRPSSRPS) show a composition bias toward low complexity. Residues 181–191 (GRRRKSGKPGR) are compositionally biased toward basic residues. Polar residues predominate over residues 194–208 (QNSYADQGRGANSNR). Over residues 211–220 (QRKRKNKKHQ) the composition is skewed to basic residues. Positions 326–495 (VRPPVVTIMG…ILEADMLELK (170 aa)) constitute a tr-type G domain. Residues 335–342 (GHVDHGKT) are G1. Residue 335-342 (GHVDHGKT) participates in GTP binding. The interval 360 to 364 (GITQN) is G2. A G3 region spans residues 381 to 384 (DTPG). GTP-binding positions include 381–385 (DTPGH) and 435–438 (NKMD). The segment at 435–438 (NKMD) is G4. The G5 stretch occupies residues 471 to 473 (SAK).

The protein belongs to the TRAFAC class translation factor GTPase superfamily. Classic translation factor GTPase family. IF-2 subfamily.

The protein localises to the cytoplasm. One of the essential components for the initiation of protein synthesis. Protects formylmethionyl-tRNA from spontaneous hydrolysis and promotes its binding to the 30S ribosomal subunits. Also involved in the hydrolysis of GTP during the formation of the 70S ribosomal complex. The polypeptide is Translation initiation factor IF-2 (Lactobacillus delbrueckii subsp. bulgaricus (strain ATCC 11842 / DSM 20081 / BCRC 10696 / JCM 1002 / NBRC 13953 / NCIMB 11778 / NCTC 12712 / WDCM 00102 / Lb 14)).